The sequence spans 601 residues: Elongation factor 4 (601 aa).

Residues 2–184 (DLIRNFSIIA…EMIARVPPPT (183 aa)) enclose the tr-type G domain. GTP-binding positions include 14 to 19 (DHGKST) and 131 to 134 (NKID).

Belongs to the TRAFAC class translation factor GTPase superfamily. Classic translation factor GTPase family. LepA subfamily.

It is found in the cell inner membrane. It carries out the reaction GTP + H2O = GDP + phosphate + H(+). Required for accurate and efficient protein synthesis under certain stress conditions. May act as a fidelity factor of the translation reaction, by catalyzing a one-codon backward translocation of tRNAs on improperly translocated ribosomes. Back-translocation proceeds from a post-translocation (POST) complex to a pre-translocation (PRE) complex, thus giving elongation factor G a second chance to translocate the tRNAs correctly. Binds to ribosomes in a GTP-dependent manner. In Polynucleobacter asymbioticus (strain DSM 18221 / CIP 109841 / QLW-P1DMWA-1) (Polynucleobacter necessarius subsp. asymbioticus), this protein is Elongation factor 4.